Consider the following 507-residue polypeptide: Chromosomal replication initiator protein DnaA (507 aa).

The domain I, interacts with DnaA modulators stretch occupies residues 1–112 (MTDDPGSGFT…PATDEADDTT (112 aa)). Residues 99–155 (RIAPPATDEADDTTVPPSENPATTSPDTTTDNDEIDDSAAARGDNQHSWPSYFTERP) form a disordered region. Over residues 113–127 (VPPSENPATTSPDTT) the composition is skewed to polar residues. The domain II stretch occupies residues 113-166 (VPPSENPATTSPDTTTDNDEIDDSAAARGDNQHSWPSYFTERPHNTDSATAGVT). A domain III, AAA+ region region spans residues 167–383 (SLNRRYTFDT…GALIRVTAFA (217 aa)). Positions 211, 213, 214, and 215 each coordinate ATP. The tract at residues 384–507 (SLNKTPIDKA…TTRIRQRSKR (124 aa)) is domain IV, binds dsDNA.

Belongs to the DnaA family. As to quaternary structure, oligomerizes as a right-handed, spiral filament on DNA at oriC.

The protein localises to the cytoplasm. Its function is as follows. Plays an essential role in the initiation and regulation of chromosomal replication. ATP-DnaA binds to the origin of replication (oriC) to initiate formation of the DNA replication initiation complex once per cell cycle. Binds the DnaA box (a 9 base pair repeat at the origin) and separates the double-stranded (ds)DNA. Forms a right-handed helical filament on oriC DNA; dsDNA binds to the exterior of the filament while single-stranded (ss)DNA is stabiized in the filament's interior. The ATP-DnaA-oriC complex binds and stabilizes one strand of the AT-rich DNA unwinding element (DUE), permitting loading of DNA polymerase. After initiation quickly degrades to an ADP-DnaA complex that is not apt for DNA replication. Binds acidic phospholipids. This is Chromosomal replication initiator protein DnaA from Mycobacterium tuberculosis (strain ATCC 25177 / H37Ra).